A 329-amino-acid polypeptide reads, in one-letter code: MDWLLLANRVLDGADITDDEALAILNCPDDELLLLLQGAYRIRKTYYGNKVKLNMIMNAKSGLCPENCGYCSQSSISTAPIPTYKMVNKETILQGAKRAYEAKIGTYCIVASGRGPSDKEIDIVVSAVKEIKETYGLKVCACLGILKPEQALRLKEAGVDRYNHNINTSKEHHPHITTSHTYDDRVRTVETVKEAGMSPCSGVIIGMKETKQDVIAMARSLKALDADSIPVNFLHAIDGTPLEGTKELNPRYCLKVLALFRYINPTKEIRISGGREVNLRSLQPLGLYAANSIFVGDYLTTAGQEKHADFQMLEDLGFDIDFAPASYAR.

The Radical SAM core domain maps to 46-275; it reads YYGNKVKLNM…TKEIRISGGR (230 aa). Residues C64, C68, and C71 each contribute to the [4Fe-4S] cluster site. [2Fe-2S] cluster-binding residues include C108, C140, C200, and R270.

This sequence belongs to the radical SAM superfamily. Biotin synthase family. In terms of assembly, homodimer. [4Fe-4S] cluster serves as cofactor. The cofactor is [2Fe-2S] cluster.

It catalyses the reaction (4R,5S)-dethiobiotin + (sulfur carrier)-SH + 2 reduced [2Fe-2S]-[ferredoxin] + 2 S-adenosyl-L-methionine = (sulfur carrier)-H + biotin + 2 5'-deoxyadenosine + 2 L-methionine + 2 oxidized [2Fe-2S]-[ferredoxin]. The protein operates within cofactor biosynthesis; biotin biosynthesis; biotin from 7,8-diaminononanoate: step 2/2. Catalyzes the conversion of dethiobiotin (DTB) to biotin by the insertion of a sulfur atom into dethiobiotin via a radical-based mechanism. This is Biotin synthase from Anoxybacillus flavithermus (strain DSM 21510 / WK1).